A 2470-amino-acid chain; its full sequence is Serine/threonine-protein kinase mTor (2470 aa).

8 HEAT repeats span residues 172-209, 746-785, 791-829, 835-873, 962-999, 1043-1080, 1083-1122, and 1124-1160; these read QHILTFFEVIFNAIFDPKPAIRESAGEALRAALIVTAQ, SYMNPILKALVPKLHEPESNPGVILNVLRTIGDLAEVNGG, LWADDLLSILLEMLGDAGSPDKRGVALWTLGQLISATGR, HKYPVLIDILINFLKTEQRRSIRRETIRVLGLLGAMDPY, PYLAQVLPNLLDNVRTADNNLREFLFQQLAILVAFVKL, DYLAELIPQILRVLQHDNSKDRMVTRRLLQALQKFGST, YYLPLILPPIVKLFDSPYVPQQVSMVALETINNLACQLDF, and DFSSRIIHPLVRVLDAEPELRDQAMTTLRSLAKQLGK. Residues 1349 to 1903 enclose the FAT domain; it reads LLGTRAMACR…VYPLTVASKS (555 aa). TPR repeat units follow at residues 1407–1440 and 1718–1751; these read ANELNVQGRWYEKLHNWDEALEHYERNLKTDSSD and MATWQNKLQDSIRPDAIQGALECFEKATSYDPNW. One copy of the HEAT 9 repeat lies at 1854–1891; sequence NTWLQVIPQLIARIDTHRQLVGQLIHQLLMDIGKNHPQ. Residues 2077-2389 enclose the PI3K/PI4K catalytic domain; sequence IKTNLQVITS…SLSNSVEDSL (313 aa). The tract at residues 2083 to 2089 is G-loop; the sequence is VITSKQR. Residues 2256–2264 form a catalytic loop region; that stretch reads GLGDRHPSN. An activation loop region spans residues 2276 to 2301; it reads HIDFGDCFEVAMTREKFPEKIPFRLT. Positions 2364 to 2389 are disordered; the sequence is AGAGAPGGRGGSGMQDSLSNSVEDSL. Positions 2367–2376 are enriched in gly residues; that stretch reads GAPGGRGGSG. The span at 2377–2386 shows a compositional bias: polar residues; the sequence is MQDSLSNSVE. Positions 2438–2470 constitute an FATC domain; it reads KSVNEQSQVELLIQQATNNENLCQCYIGWCPFW.

It belongs to the PI3/PI4-kinase family. In terms of assembly, may be part of a minimal complex, TORC1, consisting of mTor, raptor and lst8. May be part of a minimal complex, TORC2, consisting of mTor, rictor and lst8. Self-associates; assembles into homomultimeric complexes. Component of a multiprotein complex.

The enzyme catalyses L-seryl-[protein] + ATP = O-phospho-L-seryl-[protein] + ADP + H(+). The catalysed reaction is L-threonyl-[protein] + ATP = O-phospho-L-threonyl-[protein] + ADP + H(+). In terms of biological role, promotes cell and tissue growth, maintains tissue homeostatis and controls responses to environmental stress and aging. Regulates growth during animal development by coupling growth factor signaling to nutrient availability. Central regulators of autophagy. May be involved in atg1 phosphorylation. May also be involved, directly or indirectly, in the control of neuronal function. Phosphorylates S6K/p70S6K, in vitro. May regulate the activity of S6K. Overexpression inhibits growth and reduces cell size. Affects the timing of neuronal cell differentiation. Hyperactivation of the signaling leads to accelerated differentiation, whereas inhibition of the signaling retards differentiation. Thus, in addition to controlling growth of the cell in which it resides, it can also influence growth of distant cells and organs during development via a humoral mechanism. As part of the TORC1 complex regulates energy homeostasis and promotes certain aspects of larval growth by negatively regulating REPTOR. REPTOR functions downstream of TORC1 to regulate the expression of stress response genes in response to TORC1 inhibition resulting from nutrient deprivation. When TORC1 activity is high it phosphorylates REPTOR which inhibits its recruitment into the nucleus and antagonizes their function. This function is essential under normal feeding conditions to promote TORC1-dependent growth during larval development and, in adults and larvae to prevent the REPTOR-dependent expression of nutrient stress response genes. In short, during development, it primarily controls growth, whereas in the adult, where there is relatively little growth, it controls aging and other aspects of nutrient-related physiology. Rag GTPases act as activators of TORC1 in response to amino acid signals. This is Serine/threonine-protein kinase mTor from Drosophila melanogaster (Fruit fly).